The sequence spans 392 residues: Antitrypsin (392 aa).

The first 16 residues, 1–16 (MKTIICLFTIAIAAMA), serve as a signal peptide directing secretion.

This sequence belongs to the serpin family. Hemolymph.

The protein resides in the secreted. Its function is as follows. May play a role in the prophenoloxidase activating system in the silkworm hemolymph. The chain is Antitrypsin from Bombyx mori (Silk moth).